The following is a 103-amino-acid chain: Small ribosomal subunit protein uS10 (103 aa).

The protein belongs to the universal ribosomal protein uS10 family. Part of the 30S ribosomal subunit.

Functionally, involved in the binding of tRNA to the ribosomes. The polypeptide is Small ribosomal subunit protein uS10 (Neisseria gonorrhoeae (strain ATCC 700825 / FA 1090)).